A 73-amino-acid polypeptide reads, in one-letter code: Translation initiation factor IF-1 3 (73 aa).

The S1-like domain occupies 1-72 (MAKEELVEFG…TKGRINYRHK (72 aa)).

It belongs to the IF-1 family. As to quaternary structure, component of the 30S ribosomal translation pre-initiation complex which assembles on the 30S ribosome in the order IF-2 and IF-3, IF-1 and N-formylmethionyl-tRNA(fMet); mRNA recruitment can occur at any time during PIC assembly.

Its subcellular location is the cytoplasm. Its function is as follows. One of the essential components for the initiation of protein synthesis. Stabilizes the binding of IF-2 and IF-3 on the 30S subunit to which N-formylmethionyl-tRNA(fMet) subsequently binds. Helps modulate mRNA selection, yielding the 30S pre-initiation complex (PIC). Upon addition of the 50S ribosomal subunit IF-1, IF-2 and IF-3 are released leaving the mature 70S translation initiation complex. The polypeptide is Translation initiation factor IF-1 3 (Cupriavidus pinatubonensis (strain JMP 134 / LMG 1197) (Cupriavidus necator (strain JMP 134))).